We begin with the raw amino-acid sequence, 81 residues long: Large ribosomal subunit protein bL27 (81 aa).

The segment covering Met-1–Lys-11 has biased composition (polar residues). Residues Met-1–Leu-21 are disordered.

It belongs to the bacterial ribosomal protein bL27 family.

The sequence is that of Large ribosomal subunit protein bL27 from Borrelia hermsii (strain HS1 / DAH).